An 88-amino-acid chain; its full sequence is Small ribosomal subunit protein uS15c (88 aa).

Belongs to the universal ribosomal protein uS15 family. In terms of assembly, part of the 30S ribosomal subunit.

It is found in the plastid. It localises to the chloroplast. This Marchantia polymorpha (Common liverwort) protein is Small ribosomal subunit protein uS15c (rps15).